An 86-amino-acid chain; its full sequence is Small ribosomal subunit protein bS18c (86 aa).

Belongs to the bacterial ribosomal protein bS18 family. As to quaternary structure, part of the 30S ribosomal subunit.

It is found in the plastid. The protein resides in the chloroplast. This chain is Small ribosomal subunit protein bS18c, found in Pseudotsuga menziesii (Douglas-fir).